Reading from the N-terminus, the 665-residue chain is Adenylate cyclase 1 (665 aa).

The interval 1–25 is disordered; the sequence is MLQRSESGFKDIESMQDSNADKPSR. Basic and acidic residues predominate over residues 7 to 24; sequence SGFKDIESMQDSNADKPS. A run of 2 helical transmembrane segments spans residues 33-53 and 373-393; these read SLLG…LVGL and AVSG…AHLI. Residues 394-444 enclose the HAMP domain; the sequence is TKSLNQLTDSANRLQDLDFATPIDVSSHVAEISTLNGAMNRARDAIFTFAL. In terms of domain architecture, Guanylate cyclase spans 471–603; it reads TAMFTDIYDF…DTVNVASRLE (133 aa). Residues aspartate 476 and aspartate 520 each coordinate Mg(2+).

Belongs to the adenylyl cyclase class-3 family. It depends on Mg(2+) as a cofactor.

It is found in the cell membrane. It carries out the reaction ATP = 3',5'-cyclic AMP + diphosphate. Its function is as follows. Plays essential roles in regulation of cellular metabolism by catalyzing the synthesis of a second messenger, cAMP. The protein is Adenylate cyclase 1 (cya1) of Rhizobium meliloti (strain 1021) (Ensifer meliloti).